The chain runs to 163 residues: Troponin C (163 aa).

Ser1 is subject to N-acetylserine. 4 consecutive EF-hand domains span residues Glu14–Ser49, Ile50–Asp85, Ile90–Asp125, and Leu127–Arg162. Position 20 is an N6,N6-dimethyllysine; alternate (Lys20). Lys20 carries the N6-methyllysine; alternate modification. Ca(2+) is bound by residues Asp27, Asp29, Asp33, Glu38, Asp63, Asp65, Ser67, Thr69, Glu74, Asp103, Asn105, Asp107, and Glu114.

It belongs to the troponin C family.

Its function is as follows. Troponin is the central regulatory protein of striated muscle contraction. Tn consists of three components: Tn-I which is the inhibitor of actomyosin ATPase, Tn-T which contains the binding site for tropomyosin and Tn-C. The binding of calcium to Tn-C abolishes the inhibitory action of Tn on actin filaments. The protein is Troponin C of Branchiostoma lanceolatum (Common lancelet).